Here is a 221-residue protein sequence, read N- to C-terminus: 7-cyano-7-deazaguanine synthase (221 aa).

ATP is bound at residue Y9–L19. Residues C185, C193, C196, and C199 each coordinate Zn(2+).

Belongs to the QueC family. Zn(2+) serves as cofactor.

The enzyme catalyses 7-carboxy-7-deazaguanine + NH4(+) + ATP = 7-cyano-7-deazaguanine + ADP + phosphate + H2O + H(+). Its pathway is purine metabolism; 7-cyano-7-deazaguanine biosynthesis. In terms of biological role, catalyzes the ATP-dependent conversion of 7-carboxy-7-deazaguanine (CDG) to 7-cyano-7-deazaguanine (preQ(0)). In Marinobacter nauticus (strain ATCC 700491 / DSM 11845 / VT8) (Marinobacter aquaeolei), this protein is 7-cyano-7-deazaguanine synthase.